Consider the following 364-residue polypeptide: 3-dehydroquinate synthase (364 aa).

Residues 71 to 76 (DGEQYK), 105 to 109 (GVIGD), 129 to 130 (TT), Lys142, Lys151, and 169 to 172 (CLKT) each bind NAD(+). Zn(2+) contacts are provided by Glu184, His247, and His264.

The protein belongs to the sugar phosphate cyclases superfamily. Dehydroquinate synthase family. It depends on Co(2+) as a cofactor. Requires Zn(2+) as cofactor. NAD(+) serves as cofactor.

It localises to the cytoplasm. It catalyses the reaction 7-phospho-2-dehydro-3-deoxy-D-arabino-heptonate = 3-dehydroquinate + phosphate. The protein operates within metabolic intermediate biosynthesis; chorismate biosynthesis; chorismate from D-erythrose 4-phosphate and phosphoenolpyruvate: step 2/7. In terms of biological role, catalyzes the conversion of 3-deoxy-D-arabino-heptulosonate 7-phosphate (DAHP) to dehydroquinate (DHQ). This Klebsiella pneumoniae (strain 342) protein is 3-dehydroquinate synthase.